The sequence spans 248 residues: MTPIFFNQQYPTLVDICARWQLVYDANATFELRFESDTLSLHKRDEPKLDGIVVDFVTGAVAHRRKFGGGRGQSIAKAVGLKQGVMPSVVDGTAGLGRDAFVLASLGCTVTMVERHPVVAALLEDGLRRAYQDAEIGDWMRERMRLFHGSSLEALSKLAQEVDVVYLDPMYPHRDKSALVKKEMRVFQSLVGADLDADGLLAPALALATKRVVVKRPDYAEDLDGVKPNTVIETKKNRFDVYVKAAMK.

Residues 98–99, 114–115, 150–151, and D168 contribute to the S-adenosyl-L-methionine site; these read RD, ER, and SS.

The protein belongs to the methyltransferase superfamily. RsmJ family.

Its subcellular location is the cytoplasm. The catalysed reaction is guanosine(1516) in 16S rRNA + S-adenosyl-L-methionine = N(2)-methylguanosine(1516) in 16S rRNA + S-adenosyl-L-homocysteine + H(+). Specifically methylates the guanosine in position 1516 of 16S rRNA. This chain is Ribosomal RNA small subunit methyltransferase J, found in Shewanella baltica (strain OS195).